The chain runs to 836 residues: Neuroligin-2 (836 aa).

The first 14 residues, 1-14 (MWLLALCLVGLAGA), serve as a signal peptide directing secretion. Topologically, residues 15–678 (QRGGGGPGGG…DSRDYSTELS (664 aa)) are extracellular. N-linked (GlcNAc...) asparagine glycosylation is found at Asn-98 and Asn-136. 3 cysteine pairs are disulfide-bonded: Cys-106–Cys-141, Cys-317–Cys-328, and Cys-487–Cys-521. The N-linked (GlcNAc...) asparagine glycan is linked to Asn-522. Residues 623 to 661 (PPYATRWPPRTPGPGTSGTRRPPPPATLPPESDIDLGPR) form a disordered region. A helical membrane pass occupies residues 679–699 (VTVAVGASLLFLNILAFAALY). Residues 679 to 699 (VTVAVGASLLFLNILAFAALY) are required for interaction with LHFPL4. The Cytoplasmic portion of the chain corresponds to 700–836 (YKRDRRQELR…LPHPHSTTRV (137 aa)). Disordered stretches follow at residues 711–735 (RRLS…TAGR) and 791–836 (LLPS…TTRV). Phosphoserine is present on residues Ser-714 and Ser-719. Gly residues predominate over residues 717 to 728 (GGSGSGVPGGGP). Residues 796 to 819 (LGPPPPPPPPSLHPFGPFPPPPPT) are compositionally biased toward pro residues. The segment covering 824 to 836 (NNTLPHPHSTTRV) has biased composition (polar residues).

The protein belongs to the type-B carboxylesterase/lipase family. In terms of assembly, interacts with neurexins NRXN1, NRXN2 and NRXN3. Interaction with neurexins is mediated by heparan sulfate glycan modification on neurexin. Interacts (via its C-terminus) with DLG4/PSD-95 (via PDZ domain 3). Interacts with PATJ. Interacts with GPHN. Interacts with MDGA1 and MDGA2. Found in a complex with MAGI2 and IGSF9B, where it interacts with MAGI2 (via WW 1, WW 2 and PDZ 2 domains). Identified in a complex of 720 kDa composed of LHFPL4, NLGN2, GABRA1, GABRB2, GABRG2 and GABRB3. Interacts with LHFPL4; leading to mutual regulation of the protein level and synaptic clustering. Interacts with GABRA1. As to expression, detected on hippocampus neurons, especially at inhibitory synapses. Detected in retina, in the outer and inner plexiform layer. Detected in pancreas, in islet of Langerhans beta cells (at protein level). Expressed in brain, spinal cord and dorsal root ganglion. Detected in brain, and at lower levels in pancreas islet beta cells.

The protein localises to the cell membrane. Its subcellular location is the postsynaptic cell membrane. The protein resides in the presynaptic cell membrane. Its function is as follows. Transmembrane scaffolding protein involved in cell-cell interactions via its interactions with neurexin family members. Mediates cell-cell interactions both in neurons and in other types of cells, such as Langerhans beta cells. Plays a role in synapse function and synaptic signal transmission, especially via gamma-aminobutyric acid receptors (GABA(A) receptors). Functions by recruiting and clustering synaptic proteins. Promotes clustering of postsynaptic GABRG2 and GPHN. Promotes clustering of postsynaptic LHFPL4. Modulates signaling by inhibitory synapses, and thereby plays a role in controlling the ratio of signaling by excitatory and inhibitory synapses and information processing. Required for normal signal amplitude from inhibitory synapses, but is not essential for normal signal frequency. May promote the initial formation of synapses, but is not essential for this. In vitro, triggers the de novo formation of presynaptic structures. Mediates cell-cell interactions between Langerhans beta cells and modulates insulin secretion. The sequence is that of Neuroligin-2 (Nlgn2) from Rattus norvegicus (Rat).